The following is a 1165-amino-acid chain: MRVVVNAKALEVPVGMSFTEWTRTLSPGSSPRFLAWNPVRPRTFKDVTDPFWNGKVFDLLGVVNGKDDLLFPASEIQEWLEYAPNVDLAELERIFVATHRHRGMMGFAAAVQDSLVHVDPDSVDVTRVKDGLHKELDEHASKAAATDVRLKRLRSVKPVDGFSDPVLIRTVFSVTVPEFGDRTAYEIVDSAVPTGSCPYISAGPFVKTIPGFKPAPEWPAQTAHAEGAVFFKADAEFPDTKPLKDMYRKYSGAAVVPGDVTYPAVITFDVPQGSRHVPPEDFAARVAESLSLDLRGRPLVEMGRVVSVRLDGMRFRPYVLTDLLVSDPDASHVMQTDELNRAHKIKGTVYAQVCGTGQTVSFQEKTDEDSGEAYISLRVRARDRKGVEELMEAAGRVMAIYSRRESEIVSFYALYDKTVAKEAAPPRPPRKSKAPEPTGDKADRKLLRTLAPDIFLPTYSRKCLHMPVILRGAELEDARKKGLNLMDFPLFGESERLTYACKHPQHPYPGLRANLLPNKAKYPFVPCCYSKDQAVRPNSKWTAYTTGNAEARRQGRIREGVMQAEPLPEGALIFLRRVLGQETGSKFFALRTTGVPETPVNAVHVAVFQRSLTAEEQAEERAAMALDPSAMGACAQELYVEPDVDWDRWRREMGDPNVPFNLLKYFRALETRYDCDIYIMDNKGIIHTKAVRGRLRYRSRRPTVILHLREESCVPVMTPPSDWTRGPVRNGILTFSPIDPITVKLHDLYQDSRPVYVDGVRVPPLRSDWLPCSGQVVDRAGKARVFVVTPTGKMSRGSFTLVTWPMPPLAAPILRTDTGFPRGRSDSPLSFLGSRFVPSGYRRSVETGAIREITGILDGACEACLLTHDPVLVPDPSWSDGGPPVYEDPVPSRALEGFTGAEKKARMLVEYAKKAISIREGSCTQESVRSFAANGGFVVSPGALDGMKVFNPRFEAPGPFAEADWAVKVPDVKTARRLVYALRVASVNGTCPVQEYASASLVPNFYKTSTDFVQSPAYTINVWRNDLDQSAVKKTRRAVVDWERGLAVPWPLPETELGFSYSLRFAGISRTFMAMNHPTWESAAFAALTWAKSGYCPGVTSNQIPEGEKVPTYACVKGMKPAKVLESGDGTLKLDKSSYGDVRVSGVMIYRASEGKPMQYVSLLM.

The disordered stretch occupies residues Glu422–Ala442.

This is an uncharacterized protein from Frog virus 3 (isolate Goorha) (FV-3).